The chain runs to 213 residues: Nicotinamidase (213 aa).

Catalysis depends on Asp10, which acts as the Proton acceptor. Residues Asp52, His54, and His86 each coordinate Zn(2+). The active site involves Lys111. Cys156 acts as the Nucleophile in catalysis.

It belongs to the isochorismatase family.

It catalyses the reaction nicotinamide + H2O = nicotinate + NH4(+). It carries out the reaction pyrazinamide + H2O = pyrazine-2-carboxylate + NH4(+). It participates in cofactor biosynthesis; nicotinate biosynthesis; nicotinate from nicotinamide: step 1/1. Catalyzes the deamidation of nicotinamide (NAM) into nicotinate. Likely functions in the cyclical salvage pathway for production of NAD from nicotinamide. Its function is as follows. Is also able to hydrolyze the first-line antituberculous drug pyrazinamide (PZA) into pyrazinoic acid in vitro, but this reaction is not considered to be physiologically relevant. The sequence is that of Nicotinamidase from Escherichia coli (strain K12).